Here is a 129-residue protein sequence, read N- to C-terminus: Glycine cleavage system H protein (129 aa).

Positions 24–106 (IAVIGITAYA…YGDGWLIKVR (83 aa)) constitute a Lipoyl-binding domain. Lys65 is modified (N6-lipoyllysine).

It belongs to the GcvH family. In terms of assembly, the glycine cleavage system is composed of four proteins: P, T, L and H. (R)-lipoate is required as a cofactor.

In terms of biological role, the glycine cleavage system catalyzes the degradation of glycine. The H protein shuttles the methylamine group of glycine from the P protein to the T protein. This is Glycine cleavage system H protein from Synechococcus sp. (strain JA-3-3Ab) (Cyanobacteria bacterium Yellowstone A-Prime).